The chain runs to 100 residues: Urease subunit gamma (100 aa).

It belongs to the urease gamma subunit family. Heterotrimer of UreA (gamma), UreB (beta) and UreC (alpha) subunits. Three heterotrimers associate to form the active enzyme.

Its subcellular location is the cytoplasm. It carries out the reaction urea + 2 H2O + H(+) = hydrogencarbonate + 2 NH4(+). The protein operates within nitrogen metabolism; urea degradation; CO(2) and NH(3) from urea (urease route): step 1/1. The polypeptide is Urease subunit gamma (Paenarthrobacter aurescens (strain TC1)).